The following is a 406-amino-acid chain: Lysophospholipid transporter LplT (406 aa).

The next 11 membrane-spanning stretches (helical) occupy residues 16–36, 53–73, 91–111, 139–159, 164–184, 227–247, 253–273, 285–305, 310–330, 349–369, and 372–392; these read MVAV…LLFA, ILQM…GQIA, AGAL…LVGV, MMEA…GILA, MAAL…NLFI, LFWG…PVAL, ATPT…AGAA, CLPA…QNSM, LLLI…NALL, LGEN…VKLG, and VVAV…LLWG.

This sequence belongs to the major facilitator superfamily. LplT (TC 2.A.1.42) family.

Its subcellular location is the cell inner membrane. Its function is as follows. Catalyzes the facilitated diffusion of 2-acyl-glycero-3-phosphoethanolamine (2-acyl-GPE) into the cell. The protein is Lysophospholipid transporter LplT of Yersinia pestis bv. Antiqua (strain Antiqua).